The primary structure comprises 112 residues: Protein Churchill (112 aa).

Zn(2+)-binding residues include Cys2, Cys5, Cys30, Cys33, His59, Cys61, Cys64, His66, His71, Cys88, and Cys91.

The protein belongs to the Churchill family.

Functionally, transcriptional activator that mediates FGF signaling during neural development. Plays a role in the regulation of cell movement. Its function is as follows. Does not bind DNA by itself. This chain is Protein Churchill (CHURC1), found in Homo sapiens (Human).